The primary structure comprises 301 residues: uncharacterized protein (301 aa).

A signal peptide spans 1–21; it reads MKIKLILVLIVFLTIVNVNNS. Residues N19, N59, N102, and N180 are each glycosylated (N-linked (GlcNAc...) asparagine).

It is found in the secreted. This is an uncharacterized protein from Dictyostelium discoideum (Social amoeba).